The primary structure comprises 461 residues: UDP-glucosyltransferase 1 (461 aa).

The protein belongs to the UDP-glycosyltransferase family.

It functions in the pathway secondary metabolite biosynthesis. UDP-glucosyltransferase; part of the pathway that mediates the biosynthesis of tenellin-type 2-pyridones, iron-chelating compounds involved in iron stress tolerance, competition with the natural competitor fungus Metarhizium robertsii and insect hosts infection. Targets the N-OH hydroxyl residue of 15-hydroxytellenin (15-HT) to produce pyridovericin-N-O-(beta-D-glucopyranoside) which is further methylated by the methyltransferase MT1 to yield pyridovericin-N-O-(4-O-methyl-beta-D-glucopyranoside) (PMGP). The pathway begins with the assembly of the polyketide-amino acid backbone by the hybrid PKS-NRPS tenS with the help of the enoyl reductase tenC. These enzymes catalyze the synthesis of the pyrrolidine-2-dione intermediates pretellinin A, 11-hydropretellenin A, 12-hydropretellenin A, 13-hydropretellenin A, 14-hydropretellenin A, 12-oxopretellenin A and prototellinin D. The cytochrome P450 monooxygenase tenA then catalyzes an oxidative ring expansion of pretenellin A and 14-hydropretellenin A to form the 2-pyridone core, leading to pretenellin B and pyridovericin, respectively. The cytochrome P450 monooxygenase tenB is then required for the selective N-hydroxylation of the 2-pyridone nitrogen of yield tellinin and 15-hydroxytellenin (15-HT), respectively. The UDP-glucosyltransferase GT1 and the methyltransferase MT1, located outside the tenS gene cluster, contribute to the stepwise glycosylation and methylation of 15-HT to obtain the glycoside pyridovericin-N-O-(4-O-methyl-beta-D-glucopyranoside) (PMGP). Additional related compounds such as 1-O-methyl-15-HT, (8Z)-1-O-methyl-15-HT, and O-methyltenellin A are also produced but the enzymes involved in their biosynthesis have still to be determined. This chain is UDP-glucosyltransferase 1, found in Beauveria bassiana (strain ARSEF 2860) (White muscardine disease fungus).